The primary structure comprises 478 residues: Cytochrome c-552 (478 aa).

The first 26 residues, 1-26 (MTRIKINARRIFSLLIPFFFFTSVHA), serve as a signal peptide directing secretion. H94 is a heme c binding site. Heme contacts are provided by C122, C125, and K126. 6 residues coordinate heme c: C160, C163, H164, C209, C212, and H213. E215, Y216, K261, and Q263 together coordinate Ca(2+). Residue Y216 participates in substrate binding. H264 provides a ligand contact to substrate. Heme c-binding residues include H275, C282, C285, H286, H301, C314, C317, H318, and H393.

Belongs to the cytochrome c-552 family. Ca(2+) is required as a cofactor. Requires heme c as cofactor.

Its subcellular location is the periplasm. It catalyses the reaction 6 Fe(III)-[cytochrome c] + NH4(+) + 2 H2O = 6 Fe(II)-[cytochrome c] + nitrite + 8 H(+). The protein operates within nitrogen metabolism; nitrate reduction (assimilation). Functionally, catalyzes the reduction of nitrite to ammonia, consuming six electrons in the process. This Escherichia coli O6:H1 (strain CFT073 / ATCC 700928 / UPEC) protein is Cytochrome c-552.